Reading from the N-terminus, the 368-residue chain is N-acetylneuraminate epimerase (368 aa).

Residues 1–19 (MNKTITALAILMASFAANA) form the signal peptide. Kelch repeat units lie at residues 40–84 (TVYI…AFID), 86–137 (NLYV…FVHN), 139–173 (KAYV…KINA), 174–219 (HYFD…VNKG), 222–265 (TWLI…VAGG), 287–336 (ENYQ…PWNN), and 338–367 (LLII…VTVQ). Glu228 acts as the Proton acceptor in catalysis.

This sequence belongs to the NanM family. In terms of assembly, homodimer.

The protein resides in the periplasm. It carries out the reaction N-acetyl-alpha-neuraminate = N-acetyl-beta-neuraminate. In terms of biological role, converts alpha-N-acetylneuranimic acid (Neu5Ac) to the beta-anomer, accelerating the equilibrium between the alpha- and beta-anomers. Probably facilitates sialidase-negative bacteria to compete successfully for limited amounts of extracellular Neu5Ac, which is likely taken up in the beta-anomer. In addition, the rapid removal of sialic acid from solution might be advantageous to the bacterium to damp down host responses. The sequence is that of N-acetylneuraminate epimerase from Escherichia coli O157:H7.